A 348-amino-acid chain; its full sequence is Phosphoribosylformylglycinamidine cyclo-ligase (348 aa).

This sequence belongs to the AIR synthase family.

The protein resides in the cytoplasm. The catalysed reaction is 2-formamido-N(1)-(5-O-phospho-beta-D-ribosyl)acetamidine + ATP = 5-amino-1-(5-phospho-beta-D-ribosyl)imidazole + ADP + phosphate + H(+). It functions in the pathway purine metabolism; IMP biosynthesis via de novo pathway; 5-amino-1-(5-phospho-D-ribosyl)imidazole from N(2)-formyl-N(1)-(5-phospho-D-ribosyl)glycinamide: step 2/2. This Geobacter sulfurreducens (strain ATCC 51573 / DSM 12127 / PCA) protein is Phosphoribosylformylglycinamidine cyclo-ligase.